A 597-amino-acid polypeptide reads, in one-letter code: Elongation factor 4 (597 aa).

The region spanning 2–184 (DHIRNFSIIA…SLIAKVPPPK (183 aa)) is the tr-type G domain. Residues 14 to 19 (DHGKST) and 131 to 134 (NKID) contribute to the GTP site.

The protein belongs to the TRAFAC class translation factor GTPase superfamily. Classic translation factor GTPase family. LepA subfamily.

Its subcellular location is the cell inner membrane. The enzyme catalyses GTP + H2O = GDP + phosphate + H(+). Required for accurate and efficient protein synthesis under certain stress conditions. May act as a fidelity factor of the translation reaction, by catalyzing a one-codon backward translocation of tRNAs on improperly translocated ribosomes. Back-translocation proceeds from a post-translocation (POST) complex to a pre-translocation (PRE) complex, thus giving elongation factor G a second chance to translocate the tRNAs correctly. Binds to ribosomes in a GTP-dependent manner. The chain is Elongation factor 4 from Burkholderia ambifaria (strain MC40-6).